Consider the following 457-residue polypeptide: RuvB-like helicase 1 (457 aa).

73–80 (GGPSTGKT) serves as a coordination point for ATP.

Belongs to the RuvB family. As to quaternary structure, may form heterododecamers with RVB2. Component of the SWR1 chromatin remodeling complex, the INO80 chromatin remodeling complex, and of the R2TP complex.

It is found in the nucleus. It catalyses the reaction ATP + H2O = ADP + phosphate + H(+). In terms of biological role, DNA helicase which participates in several chromatin remodeling complexes, including the SWR1 and the INO80 complexes. The SWR1 complex mediates the ATP-dependent exchange of histone H2A for the H2A variant HZT1 leading to transcriptional regulation of selected genes by chromatin remodeling. The INO80 complex remodels chromatin by shifting nucleosomes and is involved in DNA repair. Also involved in pre-rRNA processing. The sequence is that of RuvB-like helicase 1 (RVB1) from Kluyveromyces lactis (strain ATCC 8585 / CBS 2359 / DSM 70799 / NBRC 1267 / NRRL Y-1140 / WM37) (Yeast).